The chain runs to 389 residues: Large envelope protein (389 aa).

At methionine 1 the chain carries N-acetylmethionine. Glycine 2 carries N-myristoyl glycine; by host lipidation. The pre-S1 stretch occupies residues 2–108 (GTNLSVPNPL…PPLRDSHPQA (107 aa)). Positions 2-163 (GTNLSVPNPL…SSRTGDPALN (162 aa)) are pre-S. At 2–170 (GTNLSVPNPL…ALNMENITSG (169 aa)) the chain is on the virion surface; in external conformation side. Topologically, residues 2–242 (GTNLSVPNPL…PGYRWMCLRR (241 aa)) are intravirion; in internal conformation. Residues 79-103 (TVPPTASTNRQSGRQPTPISPPLRD) form a disordered region. Over residues 84-95 (ASTNRQSGRQPT) the composition is skewed to polar residues. A pre-S2 region spans residues 109–163 (MQWNSTALHQALQDPRVRGLYFPAGGSSSGTLNPVPNTASHISSISSRTGDPALN). The chain crosses the membrane as a helical span at residues 171 to 191 (FLGPLLVLQAGFFLLTRILTI). Residues 192–242 (PQSLDSWWTSLNFLGGSPVCLGQNSQYPTSNHSPTSCPPICPGYRWMCLRR) lie on the Intravirion; in external conformation side of the membrane. A helical transmembrane segment spans residues 243 to 263 (FIIFLFILLLCLIFLLVLLDY). Over 264–337 (QGMLPVCPLI…WASVRFSWLS (74 aa)) the chain is Virion surface. A glycan (N-linked (GlcNAc...) asparagine; by host) is linked at asparagine 309. A helical transmembrane segment spans residues 338–358 (LLVPFVQWFVGLSPTVWLSVI). The Intravirion portion of the chain corresponds to 359–364 (WMMWYW). The chain crosses the membrane as a helical span at residues 365-387 (GPSLYNIVSPFIPLLPIFFCLWV). Residues 388–389 (YI) lie on the Virion surface side of the membrane.

Belongs to the orthohepadnavirus major surface antigen family. In terms of assembly, in its internal form (Li-HBsAg), interacts with the capsid protein and with the isoform S. Interacts with host chaperone CANX. Associates with host chaperone CANX through its pre-S2 N glycan; this association may be essential for isoform M proper secretion. As to quaternary structure, interacts with isoform L. Interacts with the antigens of satellite virus HDV (HDVAgs); this interaction is required for encapsidation of HDV genomic RNA. Isoform M is N-terminally acetylated by host at a ratio of 90%, and N-glycosylated by host at the pre-S2 region. In terms of processing, myristoylated.

The protein resides in the virion membrane. Functionally, the large envelope protein exists in two topological conformations, one which is termed 'external' or Le-HBsAg and the other 'internal' or Li-HBsAg. In its external conformation the protein attaches the virus to cell receptors and thereby initiating infection. This interaction determines the species specificity and liver tropism. This attachment induces virion internalization predominantly through caveolin-mediated endocytosis. The large envelope protein also assures fusion between virion membrane and endosomal membrane. In its internal conformation the protein plays a role in virion morphogenesis and mediates the contact with the nucleocapsid like a matrix protein. In terms of biological role, the middle envelope protein plays an important role in the budding of the virion. It is involved in the induction of budding in a nucleocapsid independent way. In this process the majority of envelope proteins bud to form subviral lipoprotein particles of 22 nm of diameter that do not contain a nucleocapsid. In Hepatitis B virus genotype A1 subtype adw2 (isolate South Africa/84/2001) (HBV-A), this protein is Large envelope protein.